The following is a 122-amino-acid chain: Large ribosomal subunit protein uL14 (122 aa).

The protein belongs to the universal ribosomal protein uL14 family. Part of the 50S ribosomal subunit. Forms a cluster with proteins L3 and L19. In the 70S ribosome, L14 and L19 interact and together make contacts with the 16S rRNA in bridges B5 and B8.

In terms of biological role, binds to 23S rRNA. Forms part of two intersubunit bridges in the 70S ribosome. The protein is Large ribosomal subunit protein uL14 of Acidiphilium cryptum (strain JF-5).